A 215-amino-acid polypeptide reads, in one-letter code: Somatotropin (215 aa).

The signal sequence occupies residues 1–25; the sequence is MAPGARISLLLLITFTLLGPQRSGA. His-44 contacts Zn(2+). A disulfide bond links Cys-77 and Cys-188. Position 130 is a phosphoserine (Ser-130). Zn(2+) is bound at residue Glu-197. Cys-205 and Cys-213 are joined by a disulfide.

This sequence belongs to the somatotropin/prolactin family.

It localises to the secreted. Functionally, plays an important role in growth control. Its major role in stimulating body growth is to stimulate the liver and other tissues to secrete IGF1. It stimulates both the differentiation and proliferation of myoblasts. It also stimulates amino acid uptake and protein synthesis in muscle and other tissues. This chain is Somatotropin (GH1), found in Trichosurus vulpecula (Brush-tailed possum).